A 360-amino-acid polypeptide reads, in one-letter code: (+)-6a-hydroxymaackiain 3-O-methyltransferase 1 (360 aa).

S-adenosyl-L-methionine contacts are provided by residues 202–205, aspartate 226, 226–227, 246–247, and lysine 260; these read VAGG, DQ, and DM. Histidine 264 functions as the Proton acceptor in the catalytic mechanism.

This sequence belongs to the class I-like SAM-binding methyltransferase superfamily. Cation-independent O-methyltransferase family. COMT subfamily.

The enzyme catalyses (+)-6a-hydroxymaackiain + S-adenosyl-L-methionine = (+)-pisatin + S-adenosyl-L-homocysteine + H(+). The catalysed reaction is a 4'-hydroxyisoflavone + S-adenosyl-L-methionine = a 4'-methoxyisoflavone + S-adenosyl-L-homocysteine + H(+). In terms of biological role, methyltransferase involved in the phytoalexin pisatin biosynthesis. Has both 3- and 4'-O-methyltransferase activities. Can use (+)-6a-hydroxymaackiain, 2,7,4'-trihydroxyisoflavanone and with much less activity (+)-medicarpin as substrates, but not (-)-6a-hydroxymaackiain, daidzein, formononetin or isoliquiritigenin. May be involved in formononetin biosynthesis. The polypeptide is (+)-6a-hydroxymaackiain 3-O-methyltransferase 1 (HMM1) (Pisum sativum (Garden pea)).